Here is a 143-residue protein sequence, read N- to C-terminus: Transcriptional regulator MraZ (143 aa).

2 SpoVT-AbrB domains span residues 5-47 (EYLH…PLDE) and 76-119 (ATEC…SQAL).

It belongs to the MraZ family. Forms oligomers.

It localises to the cytoplasm. Its subcellular location is the nucleoid. In Desulfitobacterium hafniense (strain DSM 10664 / DCB-2), this protein is Transcriptional regulator MraZ.